We begin with the raw amino-acid sequence, 721 residues long: Dipeptidyl-peptidase 5 (721 aa).

Residues 1 to 18 form the signal peptide; that stretch reads MGAFRWLSIAAAASTALA. Asn-75, Asn-94, Asn-151, and Asn-254 each carry an N-linked (GlcNAc...) asparagine glycan. Residues 271–297 are disordered; the sequence is ARPINGPDSPGTPKGIKGDSSSPVFSP. N-linked (GlcNAc...) asparagine glycans are attached at residues Asn-380 and Asn-450. Ser-560 serves as the catalytic Charge relay system. Asn-607 carries an N-linked (GlcNAc...) asparagine glycan. Active-site charge relay system residues include Asp-643 and His-675.

It belongs to the peptidase S9C family. In terms of processing, N-glycosylated. Expressed in mycelia and conidia.

It localises to the secreted. Its function is as follows. May be involved in metabolism of dipeptides or may affect host defense mechanisms. Has a substrate specificity limited to the hydrolysis of X-Ala, His-Ser, and Ser-Tyr dipeptides at a neutral pH optimum. The chain is Dipeptidyl-peptidase 5 from Aspergillus fumigatus (strain CBS 144.89 / FGSC A1163 / CEA10) (Neosartorya fumigata).